The following is a 283-amino-acid chain: Polyamine aminopropyltransferase (283 aa).

The PABS domain occupies 5–238; that stretch reads TTWIDEYHKG…GIWSWTFASS (234 aa). Glutamine 32 contributes to the S-methyl-5'-thioadenosine binding site. Residues histidine 63 and aspartate 87 each coordinate spermidine. S-methyl-5'-thioadenosine is bound by residues glutamate 107 and 139-140; that span reads DG. The Proton acceptor role is filled by aspartate 158. 158–161 provides a ligand contact to spermidine; sequence DCSD.

The protein belongs to the spermidine/spermine synthase family. As to quaternary structure, homodimer or homotetramer.

Its subcellular location is the cytoplasm. The catalysed reaction is S-adenosyl 3-(methylsulfanyl)propylamine + putrescine = S-methyl-5'-thioadenosine + spermidine + H(+). The protein operates within amine and polyamine biosynthesis; spermidine biosynthesis; spermidine from putrescine: step 1/1. Catalyzes the irreversible transfer of a propylamine group from the amino donor S-adenosylmethioninamine (decarboxy-AdoMet) to putrescine (1,4-diaminobutane) to yield spermidine. The polypeptide is Polyamine aminopropyltransferase (Prochlorococcus marinus (strain AS9601)).